The primary structure comprises 124 residues: Ribonuclease pancreatic (124 aa).

Residues 1–13 (KESAAAKFERQHM) show a composition bias toward basic and acidic residues. The segment at 1–25 (KESAAAKFERQHMDPSPSSASSSNY) is disordered. K7 and R10 together coordinate substrate. Catalysis depends on H12, which acts as the Proton acceptor. 4 disulfide bridges follow: C26–C84, C40–C95, C58–C110, and C65–C72. An N-linked (GlcNAc...) asparagine; partial glycan is attached at N34. Residues 41-45 (KPVNT), K66, and R85 each bind substrate. The active-site Proton donor is H119.

It belongs to the pancreatic ribonuclease family. In terms of assembly, monomer. Interacts with and forms tight 1:1 complexes with RNH1. Dimerization of two such complexes may occur. Interaction with RNH1 inhibits this protein. Pancreas.

It is found in the secreted. The enzyme catalyses an [RNA] containing cytidine + H2O = an [RNA]-3'-cytidine-3'-phosphate + a 5'-hydroxy-ribonucleotide-3'-[RNA].. The catalysed reaction is an [RNA] containing uridine + H2O = an [RNA]-3'-uridine-3'-phosphate + a 5'-hydroxy-ribonucleotide-3'-[RNA].. In terms of biological role, endonuclease that catalyzes the cleavage of RNA on the 3' side of pyrimidine nucleotides. Acts on single-stranded and double-stranded RNA. The polypeptide is Ribonuclease pancreatic (RNASE1) (Capreolus capreolus (European roe deer)).